A 291-amino-acid chain; its full sequence is Glutamate racemase (291 aa).

Substrate is bound by residues aspartate 12–serine 13 and tyrosine 44–glycine 45. Residue cysteine 75 is the Proton donor/acceptor of the active site. Residue asparagine 76–threonine 77 participates in substrate binding. Catalysis depends on cysteine 187, which acts as the Proton donor/acceptor. Residue threonine 188–histidine 189 coordinates substrate. Low complexity predominate over residues alanine 234–serine 247. The segment at alanine 234–aspartate 257 is disordered.

The protein belongs to the aspartate/glutamate racemases family.

The enzyme catalyses L-glutamate = D-glutamate. The protein operates within cell wall biogenesis; peptidoglycan biosynthesis. In terms of biological role, provides the (R)-glutamate required for cell wall biosynthesis. In Koribacter versatilis (strain Ellin345), this protein is Glutamate racemase.